The sequence spans 396 residues: Ribosomal RNA large subunit methyltransferase I (396 aa).

The PUA domain occupies 2–81 (TVRLILAKGR…EVIDCAFFIR (80 aa)).

The protein belongs to the methyltransferase superfamily. RlmI family.

The protein localises to the cytoplasm. It carries out the reaction cytidine(1962) in 23S rRNA + S-adenosyl-L-methionine = 5-methylcytidine(1962) in 23S rRNA + S-adenosyl-L-homocysteine + H(+). Specifically methylates the cytosine at position 1962 (m5C1962) of 23S rRNA. This Yersinia pseudotuberculosis serotype O:1b (strain IP 31758) protein is Ribosomal RNA large subunit methyltransferase I.